The primary structure comprises 320 residues: 3'-5' exoribonuclease YhaM (320 aa).

The OB DNA-binding region spans 18–90 (FLIKSATKAV…QLKIGSIRPT (73 aa)). Positions 163 to 279 (HVVCMLNVAK…LHMIDNIDAK (117 aa)) constitute an HD domain.

It belongs to the YhaM family.

In terms of biological role, shows a 3'-5' exoribonuclease activity. The polypeptide is 3'-5' exoribonuclease YhaM (Halalkalibacterium halodurans (strain ATCC BAA-125 / DSM 18197 / FERM 7344 / JCM 9153 / C-125) (Bacillus halodurans)).